The chain runs to 575 residues: Phosphoenolpyruvate-protein phosphotransferase (575 aa).

Phosphotyrosine is present on tyrosine 122. Histidine 189 serves as the catalytic Tele-phosphohistidine intermediate. Phosphoenolpyruvate is bound by residues arginine 296 and arginine 332. Glutamate 431 and aspartate 455 together coordinate Mg(2+). Phosphoenolpyruvate contacts are provided by residues 454-455 (ND) and arginine 465. The active-site Proton donor is cysteine 502.

It belongs to the PEP-utilizing enzyme family. In terms of assembly, homodimer. Interacts with the pole-localizer protein TmaR. Binding to TmaR is reversible as long as TmaR can get phosphorylated, whereas binding to non-phosphorylated TmaR is very strong and shifts the equilibrium toward binding. Mg(2+) serves as cofactor. In terms of processing, phosphorylated on Tyr-122. Phosphorylation on Tyr-122 is important for polar localization but not for interaction with TmaR and for activity.

It is found in the cytoplasm. It catalyses the reaction L-histidyl-[protein] + phosphoenolpyruvate = N(pros)-phospho-L-histidyl-[protein] + pyruvate. With respect to regulation, inhibited by oxalate. Functionally, general (non sugar-specific) component of the phosphoenolpyruvate-dependent sugar phosphotransferase system (sugar PTS). This major carbohydrate active-transport system catalyzes the phosphorylation of incoming sugar substrates concomitantly with their translocation across the cell membrane. Enzyme I transfers the phosphoryl group from phosphoenolpyruvate (PEP) to the phosphoryl carrier protein (HPr). Can also use (Z)-3-fluoro-PEP (ZFPEP), (Z)-3-methyl-PEP (ZMePEP), (Z)-3-chloro-PEP (ZClPEP) and (E)-3-chloro-PEP (EClPEP) as alternative phosphoryl donors. In Escherichia coli (strain K12), this protein is Phosphoenolpyruvate-protein phosphotransferase.